Reading from the N-terminus, the 61-residue chain is Small ribosomal subunit protein uS14 (61 aa).

Zn(2+) contacts are provided by Cys-24, Cys-27, Cys-40, and Cys-43.

The protein belongs to the universal ribosomal protein uS14 family. Zinc-binding uS14 subfamily. As to quaternary structure, part of the 30S ribosomal subunit. Contacts proteins S3 and S10. Requires Zn(2+) as cofactor.

Functionally, binds 16S rRNA, required for the assembly of 30S particles and may also be responsible for determining the conformation of the 16S rRNA at the A site. This chain is Small ribosomal subunit protein uS14, found in Endomicrobium trichonymphae.